Here is a 271-residue protein sequence, read N- to C-terminus: GPN-loop GTPase 3 (271 aa).

13–18 is a GTP binding site; that stretch reads GAGKST. The short motif at 70–72 is the Gly-Pro-Asn (GPN)-loop; involved in dimer interface element; it reads GPN. A GTP-binding site is contributed by 173–176; the sequence is SKVD.

The protein belongs to the GPN-loop GTPase family. Heterodimers with GPN1 or GPN2. Binds to RNA polymerase II (RNAPII).

Functionally, small GTPase required for proper nuclear import of RNA polymerase II and III (RNAPII and RNAPIII). May act at an RNAP assembly step prior to nuclear import. In Eremothecium gossypii (strain ATCC 10895 / CBS 109.51 / FGSC 9923 / NRRL Y-1056) (Yeast), this protein is GPN-loop GTPase 3.